The following is a 208-amino-acid chain: Glycerol-3-phosphate acyltransferase (208 aa).

The next 5 helical transmembrane spans lie at 3–23 (IIIM…VIIG), 55–75 (IVMV…TLLF), 81–101 (YTLL…YIGF), 113–133 (ILLA…LLLV), and 155–175 (IFYY…LFIF).

Belongs to the PlsY family. As to quaternary structure, probably interacts with PlsX.

It is found in the cell membrane. The catalysed reaction is an acyl phosphate + sn-glycerol 3-phosphate = a 1-acyl-sn-glycero-3-phosphate + phosphate. Its pathway is lipid metabolism; phospholipid metabolism. In terms of biological role, catalyzes the transfer of an acyl group from acyl-phosphate (acyl-PO(4)) to glycerol-3-phosphate (G3P) to form lysophosphatidic acid (LPA). This enzyme utilizes acyl-phosphate as fatty acyl donor, but not acyl-CoA or acyl-ACP. The sequence is that of Glycerol-3-phosphate acyltransferase from Lactiplantibacillus plantarum (strain ATCC BAA-793 / NCIMB 8826 / WCFS1) (Lactobacillus plantarum).